Here is a 495-residue protein sequence, read N- to C-terminus: Glutamate--tRNA ligase (495 aa).

The 'HIGH' region signature appears at 14–24; sequence PSPTGYLHIGS. Residues 255–259 carry the 'KMSKS' region motif; that stretch reads KLSKR. Residue Lys-258 coordinates ATP.

This sequence belongs to the class-I aminoacyl-tRNA synthetase family. Glutamate--tRNA ligase type 1 subfamily. As to quaternary structure, monomer.

The protein resides in the cytoplasm. It carries out the reaction tRNA(Glu) + L-glutamate + ATP = L-glutamyl-tRNA(Glu) + AMP + diphosphate. Its function is as follows. Catalyzes the attachment of glutamate to tRNA(Glu) in a two-step reaction: glutamate is first activated by ATP to form Glu-AMP and then transferred to the acceptor end of tRNA(Glu). The chain is Glutamate--tRNA ligase from Herpetosiphon aurantiacus (strain ATCC 23779 / DSM 785 / 114-95).